A 760-amino-acid chain; its full sequence is Formin-like protein 8 (760 aa).

An N-terminal signal peptide occupies residues Met1 to Ser29. A compositionally biased stretch (pro residues) spans Pro52 to Pro63. The tract at residues Pro52–Asp71 is disordered. A helical membrane pass occupies residues Ala78–Gln98. Residues Thr204–Lys313 are disordered. The segment covering Thr253–Val274 has biased composition (pro residues). Positions Ser296–Arg732 constitute an FH2 domain.

It belongs to the formin-like family. Class-I subfamily. As to quaternary structure, interacts with profilin.

Its subcellular location is the cell membrane. Might be involved in the organization and polarity of the actin cytoskeleton. Interacts with the barbed end of actin filaments and nucleates actin-filament polymerization in vitro. The sequence is that of Formin-like protein 8 (FH8) from Arabidopsis thaliana (Mouse-ear cress).